The sequence spans 169 residues: Ribosome maturation factor RimM (169 aa).

Positions 97-169 (PGEYYWYQLI…VITVDWDMNF (73 aa)) constitute a PRC barrel domain.

Belongs to the RimM family. As to quaternary structure, binds ribosomal protein uS19.

The protein resides in the cytoplasm. An accessory protein needed during the final step in the assembly of 30S ribosomal subunit, possibly for assembly of the head region. Essential for efficient processing of 16S rRNA. May be needed both before and after RbfA during the maturation of 16S rRNA. It has affinity for free ribosomal 30S subunits but not for 70S ribosomes. The protein is Ribosome maturation factor RimM of Legionella pneumophila (strain Paris).